A 313-amino-acid polypeptide reads, in one-letter code: Adhesin MafA 2 (313 aa).

Residues methionine 1–alanine 14 form the signal peptide. Cysteine 15 is lipidated: N-palmitoyl cysteine. Cysteine 15 carries the S-diacylglycerol cysteine lipid modification. A compositionally biased stretch (polar residues) spans glycine 282–glycine 297. A disordered region spans residues glycine 282 to glycine 313.

The protein belongs to the MafA family.

The protein resides in the cell outer membrane. In Neisseria meningitidis serogroup A / serotype 4A (strain DSM 15465 / Z2491), this protein is Adhesin MafA 2 (mafA2).